Reading from the N-terminus, the 517-residue chain is ATP synthase subunit alpha (517 aa).

ATP is bound at residue 174–181 (GDRQTGKT).

The protein belongs to the ATPase alpha/beta chains family. F-type ATPases have 2 components, CF(1) - the catalytic core - and CF(0) - the membrane proton channel. CF(1) has five subunits: alpha(3), beta(3), gamma(1), delta(1), epsilon(1). CF(0) has three main subunits: a(1), b(2) and c(9-12). The alpha and beta chains form an alternating ring which encloses part of the gamma chain. CF(1) is attached to CF(0) by a central stalk formed by the gamma and epsilon chains, while a peripheral stalk is formed by the delta and b chains.

It localises to the cell inner membrane. It carries out the reaction ATP + H2O + 4 H(+)(in) = ADP + phosphate + 5 H(+)(out). In terms of biological role, produces ATP from ADP in the presence of a proton gradient across the membrane. The alpha chain is a regulatory subunit. The protein is ATP synthase subunit alpha of Delftia acidovorans (strain DSM 14801 / SPH-1).